A 490-amino-acid polypeptide reads, in one-letter code: Probable cytosol aminopeptidase (490 aa).

Residues Lys-262 and Asp-267 each coordinate Mn(2+). Lys-274 is an active-site residue. Mn(2+)-binding residues include Asp-285, Asp-344, and Glu-346. Residue Arg-348 is part of the active site.

It belongs to the peptidase M17 family. Requires Mn(2+) as cofactor.

The protein resides in the cytoplasm. The enzyme catalyses Release of an N-terminal amino acid, Xaa-|-Yaa-, in which Xaa is preferably Leu, but may be other amino acids including Pro although not Arg or Lys, and Yaa may be Pro. Amino acid amides and methyl esters are also readily hydrolyzed, but rates on arylamides are exceedingly low.. It catalyses the reaction Release of an N-terminal amino acid, preferentially leucine, but not glutamic or aspartic acids.. Its function is as follows. Presumably involved in the processing and regular turnover of intracellular proteins. Catalyzes the removal of unsubstituted N-terminal amino acids from various peptides. This chain is Probable cytosol aminopeptidase, found in Xanthomonas axonopodis pv. citri (strain 306).